We begin with the raw amino-acid sequence, 427 residues long: Gamma-glutamyl phosphate reductase (427 aa).

The protein belongs to the gamma-glutamyl phosphate reductase family.

It is found in the cytoplasm. It carries out the reaction L-glutamate 5-semialdehyde + phosphate + NADP(+) = L-glutamyl 5-phosphate + NADPH + H(+). It participates in amino-acid biosynthesis; L-proline biosynthesis; L-glutamate 5-semialdehyde from L-glutamate: step 2/2. Catalyzes the NADPH-dependent reduction of L-glutamate 5-phosphate into L-glutamate 5-semialdehyde and phosphate. The product spontaneously undergoes cyclization to form 1-pyrroline-5-carboxylate. In Bifidobacterium adolescentis (strain ATCC 15703 / DSM 20083 / NCTC 11814 / E194a), this protein is Gamma-glutamyl phosphate reductase.